Consider the following 359-residue polypeptide: Peptide chain release factor 1 (359 aa).

Gln235 is subject to N5-methylglutamine. The disordered stretch occupies residues 283 to 309; sequence QKAESERSQARRSQVGSGDRSERIRTY.

It belongs to the prokaryotic/mitochondrial release factor family. Methylated by PrmC. Methylation increases the termination efficiency of RF1.

The protein resides in the cytoplasm. Functionally, peptide chain release factor 1 directs the termination of translation in response to the peptide chain termination codons UAG and UAA. This Brucella canis (strain ATCC 23365 / NCTC 10854 / RM-666) protein is Peptide chain release factor 1.